Here is a 141-residue protein sequence, read N- to C-terminus: Endoribonuclease YbeY (141 aa).

Zn(2+)-binding residues include His-107, His-111, and His-117.

It belongs to the endoribonuclease YbeY family. Zn(2+) serves as cofactor.

The protein localises to the cytoplasm. Functionally, single strand-specific metallo-endoribonuclease involved in late-stage 70S ribosome quality control and in maturation of the 3' terminus of the 16S rRNA. In Leptospira interrogans serogroup Icterohaemorrhagiae serovar Lai (strain 56601), this protein is Endoribonuclease YbeY.